The following is a 31-amino-acid chain: MPTIVSYFGFLLTASTITPALFIGLSKIRLI.

The chain crosses the membrane as a helical span at residues 4-26 (IVSYFGFLLTASTITPALFIGLS).

This sequence belongs to the PetL family. The 4 large subunits of the cytochrome b6-f complex are cytochrome b6, subunit IV (17 kDa polypeptide, PetD), cytochrome f and the Rieske protein, while the 4 small subunits are PetG, PetL, PetM and PetN. The complex functions as a dimer.

It is found in the plastid. The protein localises to the chloroplast thylakoid membrane. Component of the cytochrome b6-f complex, which mediates electron transfer between photosystem II (PSII) and photosystem I (PSI), cyclic electron flow around PSI, and state transitions. PetL is important for photoautotrophic growth as well as for electron transfer efficiency and stability of the cytochrome b6-f complex. The polypeptide is Cytochrome b6-f complex subunit 6 (Nymphaea alba (White water-lily)).